A 1092-amino-acid polypeptide reads, in one-letter code: Extended synaptotagmin-1 (1092 aa).

Met1 carries the N-acetylmethionine modification. The Cytoplasmic segment spans residues 1 to 28 (MEHSPEEGASPEPSGQPPATDSTRDGGS). The segment at 1–36 (MEHSPEEGASPEPSGQPPATDSTRDGGSGVPPAGPG) is disordered. Residues 29 to 49 (GVPPAGPGAASEALAVLTSFG) traverse the membrane as a helical segment. Topologically, residues 50–52 (RRL) are lumenal. The chain crosses the membrane as a helical span at residues 53–73 (LVLVPVYLAGAAGLSVGFVLF). Residues 74–1092 (GLALYLGWRR…LMDDRDKGGS (1019 aa)) lie on the Cytoplasmic side of the membrane. The region spanning 125 to 303 (DVEKAEWLNK…LPNRLLVPLV (179 aa)) is the SMP-LTD domain. C2 domains are found at residues 302–423 (LVPD…DNWY), 444–570 (DAEK…QLSS), 616–738 (DAPP…DEWL), and 769–886 (QVNS…ALSG). Ser314 is subject to Phosphoserine; by CDK5. Ca(2+) contacts are provided by Lys334, Asp335, Asp347, Asp394, Asp396, Asp398, Asp400, and Asp401. The interval 604–628 (WDRESLETGSSVDAPPRPYHTTPNS) is disordered. The residue at position 804 (Lys804) is an N6-acetyllysine. Ser807 carries the post-translational modification Phosphoserine. The disordered stretch occupies residues 909–937 (HSHSYSHSHSSSSLNDEPEALGGPTHPAS). Residues 911–921 (HSYSHSHSSSS) are compositionally biased toward low complexity. A phosphoserine mark is found at Ser937 and Ser951. One can recognise a C2 5 domain in the interval 959–1081 (PLGQVKLTVW…DLSQGAAQWY (123 aa)). A Phosphotyrosine modification is found at Tyr997. The tract at residues 1006-1013 (KNRSTKRK) is required for phosphatidylinositol 4,5-bisphosphate-dependent location at the cell membrane.

The protein belongs to the extended synaptotagmin family. As to quaternary structure, interacts with ESYT2 and ESYT3. Interacts with ADGRD1; inhibiting the G-protein-coupled receptor activity of ADGRD1. Interaction with ADGRD1 is abolished when cytosolic calcium increases, relieving ADGRD1 G-protein-coupled receptor activity. Interacts (phosphorylated form) with SLC2A4. Post-translationally, phosphorylated on Ser residues in insulin-treated adipocytes (in vitro); this promotes interaction with SLC2A4.

It is found in the endoplasmic reticulum membrane. The protein resides in the cell membrane. Its function is as follows. Binds calcium (via the C2 domains) and translocates to sites of contact between the endoplasmic reticulum and the cell membrane in response to increased cytosolic calcium levels. Helps tether the endoplasmic reticulum to the cell membrane and promotes the formation of appositions between the endoplasmic reticulum and the cell membrane. Acts as an inhibitor of ADGRD1 G-protein-coupled receptor activity in absence of cytosolic calcium. Binds glycerophospholipids in a barrel-like domain and may play a role in cellular lipid transport. The protein is Extended synaptotagmin-1 (Esyt1) of Mus musculus (Mouse).